Reading from the N-terminus, the 679-residue chain is UvrABC system protein B (679 aa).

Positions 25–176 constitute a Helicase ATP-binding domain; the sequence is EGVNGGERYQ…NLRGSLRDLV (152 aa). Position 38–45 (38–45) interacts with ATP; sequence GATGTGKT. Residues 91–114 carry the Beta-hairpin motif; the sequence is YYDYYQPEAYVPVSDTYIAKTASI. In terms of domain architecture, Helicase C-terminal spans 429-591; the sequence is QVDDLLGEIR…ITPTAAGKKA (163 aa). The region spanning 638-673 is the UVR domain; it reads PELIDQLELKMKESAKKLDFEEAANLRDRIKKLRQK.

It belongs to the UvrB family. As to quaternary structure, forms a heterotetramer with UvrA during the search for lesions. Interacts with UvrC in an incision complex.

Its subcellular location is the cytoplasm. The UvrABC repair system catalyzes the recognition and processing of DNA lesions. A damage recognition complex composed of 2 UvrA and 2 UvrB subunits scans DNA for abnormalities. Upon binding of the UvrA(2)B(2) complex to a putative damaged site, the DNA wraps around one UvrB monomer. DNA wrap is dependent on ATP binding by UvrB and probably causes local melting of the DNA helix, facilitating insertion of UvrB beta-hairpin between the DNA strands. Then UvrB probes one DNA strand for the presence of a lesion. If a lesion is found the UvrA subunits dissociate and the UvrB-DNA preincision complex is formed. This complex is subsequently bound by UvrC and the second UvrB is released. If no lesion is found, the DNA wraps around the other UvrB subunit that will check the other stand for damage. The protein is UvrABC system protein B of Synechococcus sp. (strain CC9311).